A 610-amino-acid polypeptide reads, in one-letter code: MHFQAFWLCLGLLFISINAEFMDDDVETEDFEENSEEIDVNESELSSEIKYKTPQPIGEVYFAETFDSGRLAGWVLSKAKKDDMDEEISIYDGRWEIEELKENQVPGDRGLVLKSRAKHHAISAVLAKPFIFADKPLIVQYEVNFQDGIDCGGAYIKLLADTDDLILENFYDKTSYIIMFGPDKCGEDYKLHFIFRHKHPKTGVFEEKHAKPPDVDLKKFFTDRKTHLYTLVMNPDDTFEVLVDQTVVNKGSLLEDVVPPIKPPKEIEDPNDKKPEEWDERAKIPDPSAVKPEDWDESEPAQIEDSSVVKPAGWLDDEPKFIPDPNAEKPDDWNEDTDGEWEAPQILNPACRIGCGEWKPPMIDNPKYKGVWRPPLVDNPNYQGIWSPRKIPNPDYFEDDHPFLLTSFSALGLELWSMTSDIYFDNFIICSEKEVADHWAADGWRWKIMIANANKPGVLKQLMAAAEGHPWLWLIYLVTAGVPIALITSFCWPRKVKKKHKDTEYKKTDICIPQTKGVLEQEEKEEKAALEKPMDLEEEKKQNDGEMLEKEEESEPEEKSEEEIEIIEGQEESNQSNKSGSEDEMKEADESTGSGDGPIKSVRKRRVRKD.

An N-terminal signal peptide occupies residues 1–19; the sequence is MHFQAFWLCLGLLFISINA. Topologically, residues 20–471 are lumenal; it reads EFMDDDVETE…LMAAAEGHPW (452 aa). Lys-128 is subject to N6-acetyllysine. Cys-151 and Cys-185 form a disulfide bridge. The disordered stretch occupies residues 258 to 338; sequence VPPIKPPKEI…KPDDWNEDTD (81 aa). Positions 263 to 284 are enriched in basic and acidic residues; the sequence is PPKEIEDPNDKKPEEWDERAKI. 8 tandem repeats follow at residues 267–280, 284–297, 303–316, 322–335, 339–352, 356–369, 370–383, and 384–397. Residues 317–332 are compositionally biased toward basic and acidic residues; that stretch reads DEPKFIPDPNAEKPDD. Residues 317–350 form an interaction with PPIB region; it reads DEPKFIPDPNAEKPDDWNEDTDGEWEAPQILNPA. Residues Cys-351 and Cys-355 are joined by a disulfide bond. A helical membrane pass occupies residues 472–492; that stretch reads LWLIYLVTAGVPIALITSFCW. Topologically, residues 493–610 are cytoplasmic; it reads PRKVKKKHKD…SVRKRRVRKD (118 aa). The segment covering 521–548 has biased composition (basic and acidic residues); that stretch reads QEEKEEKAALEKPMDLEEEKKQNDGEML. The tract at residues 521 to 610 is disordered; that stretch reads QEEKEEKAAL…SVRKRRVRKD (90 aa). Residues 549 to 571 show a composition bias toward acidic residues; that stretch reads EKEEESEPEEKSEEEIEIIEGQE. A phosphoserine mark is found at Ser-560, Ser-576, Ser-579, Ser-581, Ser-591, Ser-594, and Ser-601. The segment covering 601–610 has biased composition (basic residues); sequence SVRKRRVRKD.

It belongs to the calreticulin family. In terms of assembly, interacts with PPIB. Interacts with ADAM2. Interacts with PDILT. As to expression, detected in testis (at protein level). Detected in testis.

The protein resides in the endoplasmic reticulum membrane. Its function is as follows. Functions during spermatogenesis as a chaperone for a range of client proteins that are important for sperm adhesion onto the egg zona pellucida and for subsequent penetration of the zona pellucida. Required for normal sperm migration from the uterus into the oviduct. Required for normal male fertility. Binds calcium ions. The chain is Calmegin (CLGN) from Homo sapiens (Human).